The primary structure comprises 86 residues: Acyl carrier protein (86 aa).

Residues 2–82 (ATVFERVKKV…AVVDYLKSKG (81 aa)) enclose the Carrier domain. Serine 37 carries the O-(pantetheine 4'-phosphoryl)serine modification.

The protein belongs to the acyl carrier protein (ACP) family. Post-translationally, 4'-phosphopantetheine is transferred from CoA to a specific serine of apo-ACP by AcpS. This modification is essential for activity because fatty acids are bound in thioester linkage to the sulfhydryl of the prosthetic group.

The protein resides in the cytoplasm. It participates in lipid metabolism; fatty acid biosynthesis. Carrier of the growing fatty acid chain in fatty acid biosynthesis. This chain is Acyl carrier protein, found in Dehalococcoides mccartyi (strain ATCC BAA-2266 / KCTC 15142 / 195) (Dehalococcoides ethenogenes (strain 195)).